The following is a 120-amino-acid chain: Small ribosomal subunit protein uS13 (120 aa).

The segment at 93 to 120 is disordered; it reads RRGLPCRGQKTKTNARTRKGKRKTVGAA.

It belongs to the universal ribosomal protein uS13 family. In terms of assembly, part of the 30S ribosomal subunit. Forms a loose heterodimer with protein S19. Forms two bridges to the 50S subunit in the 70S ribosome.

In terms of biological role, located at the top of the head of the 30S subunit, it contacts several helices of the 16S rRNA. In the 70S ribosome it contacts the 23S rRNA (bridge B1a) and protein L5 of the 50S subunit (bridge B1b), connecting the 2 subunits; these bridges are implicated in subunit movement. Contacts the tRNAs in the A and P-sites. This Sulfurimonas denitrificans (strain ATCC 33889 / DSM 1251) (Thiomicrospira denitrificans (strain ATCC 33889 / DSM 1251)) protein is Small ribosomal subunit protein uS13.